The chain runs to 81 residues: Acyl carrier protein (81 aa).

Positions 2–80 constitute a Carrier domain; the sequence is ASEQEILSGL…DAVAYISQAQ (79 aa). Ser-40 is subject to O-(pantetheine 4'-phosphoryl)serine.

This sequence belongs to the acyl carrier protein (ACP) family. Post-translationally, 4'-phosphopantetheine is transferred from CoA to a specific serine of apo-ACP by AcpS. This modification is essential for activity because fatty acids are bound in thioester linkage to the sulfhydryl of the prosthetic group.

It is found in the cytoplasm. Its pathway is lipid metabolism; fatty acid biosynthesis. In terms of biological role, carrier of the growing fatty acid chain in fatty acid biosynthesis. In Kineococcus radiotolerans (strain ATCC BAA-149 / DSM 14245 / SRS30216), this protein is Acyl carrier protein.